Reading from the N-terminus, the 185-residue chain is Probable chorismate pyruvate-lyase 2 (185 aa).

Substrate is bound by residues R80, L118, and E170.

The protein belongs to the UbiC family.

The protein resides in the cytoplasm. It catalyses the reaction chorismate = 4-hydroxybenzoate + pyruvate. Its pathway is cofactor biosynthesis; ubiquinone biosynthesis. Removes the pyruvyl group from chorismate, with concomitant aromatization of the ring, to provide 4-hydroxybenzoate (4HB) for the ubiquinone pathway. The sequence is that of Probable chorismate pyruvate-lyase 2 from Pseudomonas entomophila (strain L48).